The chain runs to 146 residues: Small nuclear ribonucleoprotein Sm D1 (146 aa).

In terms of domain architecture, Sm spans 2–101 (KLVNFLKKLR…IRQIILPDSL (100 aa)). The interval 118 to 146 (RSGQIANDPSKKRRRDFGAPANKRPRRGL) is disordered. Residues 128–144 (KKRRRDFGAPANKRPRR) carry the Nuclear localization signal motif.

Belongs to the snRNP core protein family. Component of the Sm core complex, present in spliceosomal snRNP U1, U2, U4/U6 and U5. The core complex contains SMB1, SMD1, SMD2, SMD3, SME1, SMX3 and SMX2 (Sm proteins B, D1, D2, D3, E, F and G, respectively), and is probably a heptameric ring structure. Belongs to the CWC complex (or CEF1-associated complex), a spliceosome sub-complex reminiscent of a late-stage spliceosome composed of the U2, U5 and U6 snRNAs and at least BUD13, BUD31, BRR2, CDC40, CEF1, CLF1, CUS1, CWC2, CWC15, CWC21, CWC22, CWC23, CWC24, CWC25, CWC27, ECM2, HSH155, IST3, ISY1, LEA1, MSL1, NTC20, PRP8, PRP9, PRP11, PRP19, PRP21, PRP22, PRP45, PRP46, SLU7, SMB1, SMD1, SMD2, SMD3, SMX2, SMX3, SNT309, SNU114, SPP2, SYF1, SYF2, RSE1 and YJU2. Component of the U4/U6-U5 tri-snRNP complex composed of the U4, U6 and U5 snRNAs and at least PRP3, PRP4, PRP6, PRP8, PRP18, PRP31, PRP38, SNU13, SNU23, SNU66, SNU114, SPP381, SMB1, SMD1, SMD2, SMD3, SMX2, SMX3, LSM2, LSM3, LSM4, LSM5, LSM6, LSM7, LSM8, BRR2 and DIB1.

The protein resides in the nucleus. Its subcellular location is the cytoplasm. Functionally, lays a role in pre-mRNA splicing as a core component of the spliceosomal U1, U2, U4 and U5 small nuclear ribonucleoproteins (snRNPs), the building blocks of the spliceosome. Also binds telomerase RNA and is required for its accumulation. This is Small nuclear ribonucleoprotein Sm D1 (SMD1) from Saccharomyces cerevisiae (strain ATCC 204508 / S288c) (Baker's yeast).